Consider the following 833-residue polypeptide: Leucine--tRNA ligase (833 aa).

A 'HIGH' region motif is present at residues 41-52 (PYPSGAGLHVGH). Positions 610–614 (KMSKS) match the 'KMSKS' region motif. Lysine 613 contributes to the ATP binding site.

Belongs to the class-I aminoacyl-tRNA synthetase family.

It is found in the cytoplasm. The catalysed reaction is tRNA(Leu) + L-leucine + ATP = L-leucyl-tRNA(Leu) + AMP + diphosphate. The protein is Leucine--tRNA ligase of Streptococcus pyogenes serotype M5 (strain Manfredo).